A 574-amino-acid chain; its full sequence is Sulfate adenylyltransferase (574 aa).

An N-terminal region spans residues 1–169; that stretch reads MANPPHGGVL…IEAINKLNHY (169 aa). The tract at residues 170–394 is catalytic; that stretch reads DYVALRYTPA…LRESSPPRHT (225 aa). Q197 is a binding site for sulfate. Residues 197-200 and 291-294 each bind ATP; these read QTRN and GRDH. Catalysis depends on residues T198, R199, and N200. Sulfate is bound at residue R199. Sulfate is bound at residue A295. An ATP-binding site is contributed by V333. The allosteric regulation domain; adenylyl-sulfate kinase-like stretch occupies residues 395 to 574; it reads QGFTIFLTGY…LETEGFFDRS (180 aa). 3'-phosphoadenylyl sulfate is bound by residues 434–437, R451, 477–478, and R516; these read DTVR and IA.

It in the N-terminal section; belongs to the sulfate adenylyltransferase family. In the C-terminal section; belongs to the APS kinase family. Homohexamer. Dimer of trimers.

The protein localises to the cytoplasm. It catalyses the reaction sulfate + ATP + H(+) = adenosine 5'-phosphosulfate + diphosphate. It functions in the pathway sulfur metabolism; hydrogen sulfide biosynthesis; sulfite from sulfate: step 1/3. With respect to regulation, allosterically inhibited by 3'-phosphoadenosine 5'-phosphosulfate (PAPS). Functionally, catalyzes the first intracellular reaction of sulfate assimilation, forming adenosine-5'-phosphosulfate (APS) from inorganic sulfate and ATP. Plays an important role in sulfate activation as a component of the biosynthesis pathway of sulfur-containing amino acids. The protein is Sulfate adenylyltransferase of Neosartorya fischeri (strain ATCC 1020 / DSM 3700 / CBS 544.65 / FGSC A1164 / JCM 1740 / NRRL 181 / WB 181) (Aspergillus fischerianus).